A 371-amino-acid chain; its full sequence is Peptide chain release factor 2 (371 aa).

Position 252 is an N5-methylglutamine (glutamine 252).

Belongs to the prokaryotic/mitochondrial release factor family. Post-translationally, methylated by PrmC. Methylation increases the termination efficiency of RF2.

The protein resides in the cytoplasm. Functionally, peptide chain release factor 2 directs the termination of translation in response to the peptide chain termination codons UGA and UAA. The sequence is that of Peptide chain release factor 2 from Staphylococcus epidermidis (strain ATCC 35984 / DSM 28319 / BCRC 17069 / CCUG 31568 / BM 3577 / RP62A).